The primary structure comprises 278 residues: Replication-associated protein G2P (278 aa).

The protein belongs to the inovirus G2P protein family.

The enzyme catalyses ATP + (deoxyribonucleotide)n-3'-hydroxyl + 5'-phospho-(deoxyribonucleotide)m = (deoxyribonucleotide)n+m + AMP + diphosphate.. Its function is as follows. Isoform G2P plays an essential role in viral DNA replication. Binds the origin of replication and cleaves the dsDNA replicative form I (RFI) and becomes covalently bound to it via phosphotyrosine bond, generating the dsDNA replicative form II (RFII). In turn, viral DNA replication initiates at the 3'-OH of the cleavage site. After one round of rolling circle synthesis, protein G2P is linked to the newly synthesized ssDNA and joins the ends of the displaced strand to generate a circular single-stranded molecule ready to be packed into a virion. Isoform G10P protein binds to double-stranded DNA and prevents hydrolysis by nucleases. Additionally, G10P is an inhibitor of DNA replication and may have a role in the transition from semiconservative replicative form DNA replication to single-stranded DNA synthesis in the life cycle. This chain is Replication-associated protein G2P (II), found in Pseudomonas aeruginosa (Bacteriophage Pf3).